Consider the following 519-residue polypeptide: Bifunctional pantoate ligase/cytidylate kinase (519 aa).

The interval 1-282 is pantoate--beta-alanine ligase; it reads MNLTILRTKT…CGNTRLIDHG (282 aa). 30–37 lines the ATP pocket; sequence MGGLHQGH. Histidine 37 (proton donor) is an active-site residue. Residue glutamine 66 participates in (R)-pantoate binding. Glutamine 66 serves as a coordination point for beta-alanine. 155–158 lines the ATP pocket; that stretch reads GEKD. (R)-pantoate is bound at residue glutamine 161. 192 to 195 contacts ATP; the sequence is CSSR. Residues 283–519 form a cytidylate kinase region; sequence FLMKRNPIVA…PQEVWPTNAT (237 aa).

This sequence in the N-terminal section; belongs to the pantothenate synthetase family. It in the C-terminal section; belongs to the cytidylate kinase family. Type 1 subfamily.

The protein localises to the cytoplasm. The enzyme catalyses (R)-pantoate + beta-alanine + ATP = (R)-pantothenate + AMP + diphosphate + H(+). It catalyses the reaction CMP + ATP = CDP + ADP. The catalysed reaction is dCMP + ATP = dCDP + ADP. It functions in the pathway cofactor biosynthesis; (R)-pantothenate biosynthesis; (R)-pantothenate from (R)-pantoate and beta-alanine: step 1/1. Catalyzes the condensation of pantoate with beta-alanine in an ATP-dependent reaction via a pantoyl-adenylate intermediate. Functionally, catalyzes the transfer of a phosphate group from ATP to either CMP or dCMP to form CDP or dCDP and ADP, respectively. This is Bifunctional pantoate ligase/cytidylate kinase from Prochlorococcus marinus (strain SARG / CCMP1375 / SS120).